Reading from the N-terminus, the 263-residue chain is 3-methyl-2-oxobutanoate hydroxymethyltransferase (263 aa).

Residues aspartate 44 and aspartate 83 each contribute to the Mg(2+) site. 3-methyl-2-oxobutanoate is bound by residues 44 to 45 (DS), aspartate 83, and lysine 112. Mg(2+) is bound at residue glutamate 114. The active-site Proton acceptor is glutamate 181.

This sequence belongs to the PanB family. In terms of assembly, homodecamer; pentamer of dimers. Requires Mg(2+) as cofactor.

Its subcellular location is the cytoplasm. It catalyses the reaction 3-methyl-2-oxobutanoate + (6R)-5,10-methylene-5,6,7,8-tetrahydrofolate + H2O = 2-dehydropantoate + (6S)-5,6,7,8-tetrahydrofolate. It participates in cofactor biosynthesis; (R)-pantothenate biosynthesis; (R)-pantoate from 3-methyl-2-oxobutanoate: step 1/2. Catalyzes the reversible reaction in which hydroxymethyl group from 5,10-methylenetetrahydrofolate is transferred onto alpha-ketoisovalerate to form ketopantoate. The protein is 3-methyl-2-oxobutanoate hydroxymethyltransferase of Sulfurimonas denitrificans (strain ATCC 33889 / DSM 1251) (Thiomicrospira denitrificans (strain ATCC 33889 / DSM 1251)).